A 388-amino-acid polypeptide reads, in one-letter code: Pepsin A-1 (388 aa).

A signal peptide spans 1–15 (MKWLLLLGLVALSEC). 2 consecutive propeptides (activation peptide) follow at residues 16 to 40 (IIYK…LLKD) and 41 to 62 (FLKK…APTL). The Peptidase A1 domain maps to 76–385 (YFGTIGIGTP…DRANNQVGLA (310 aa)). The active site involves aspartate 94. Cysteines 107 and 112 form a disulfide. Serine 130 bears the Phosphoserine mark. An intrachain disulfide couples cysteine 268 to cysteine 272. Aspartate 277 is a catalytic residue. Cysteine 311 and cysteine 344 are oxidised to a cystine.

It belongs to the peptidase A1 family. Post-translationally, each pepsinogen is converted to corresponding pepsin at pH 2.0 in part as a result of the release of a 47 AA activation segment and in part as a result of stepwise proteolytic cleavage via an intermediate form(s).

It is found in the secreted. It carries out the reaction Preferential cleavage: hydrophobic, preferably aromatic, residues in P1 and P1' positions. Cleaves 1-Phe-|-Val-2, 4-Gln-|-His-5, 13-Glu-|-Ala-14, 14-Ala-|-Leu-15, 15-Leu-|-Tyr-16, 16-Tyr-|-Leu-17, 23-Gly-|-Phe-24, 24-Phe-|-Phe-25 and 25-Phe-|-Tyr-26 bonds in the B chain of insulin.. In terms of biological role, shows particularly broad specificity; although bonds involving phenylalanine and leucine are preferred, many others are also cleaved to some extent. The chain is Pepsin A-1 (PGA) from Macaca fuscata fuscata (Japanese macaque).